A 985-amino-acid polypeptide reads, in one-letter code: MSTGLTPPPQPIKRPPKAVTWIFAIIALIILIAPMSVGFYTDWLWFGEVDFRGVFSKVIVTRIVLFVIFALIAGFVTWLAGYFVTKLRPDEMSAFDTQSPVYQYRQMIENSLRRVMVLIPIFVALLAGLIGQRSWRTVQMWMNGQSFGVSDQQFGHDYGFYAFDLPMLRLVTDSLSMMLIVAFLIALVGHYLMGGIRAGNQMTGQKSFVSRGARTQLAVTAGLWMLVKVAGYWLDRYDLLTKENSTFTGASYTDINAQLPAKIILLVIALFVAIAFFSAIFLKDLRIPGLAVVLMLLSSVIIGAAWPLMLERFSVQPNRAEKEAEYISRNIESTRYAYGITDEDVTYEENWGAGETTNEEVAADSATISNIRLLDPQILSPTFTQQQQLRNFYGFPDQLAMDRFEVDGELRDFVVAARELDPNALQQNQQDWINRHTVYTHGNGFIAAQANQVDEVARDVGSTRGGYPVYTVSDLQSNARAAESEDAEQLGIKVDEPRVYYGPLIASATDGADYAIVGDTGDGPVEYDTDTSSYTYEGAGGVDIGNMVNRAMFALRYQEMNMLLSDRVGSESKILFERDPRSRVEKVAPWLTTDSKTYPTVIDGRIKWIVDGYTTLDSLPYSTRTSLTEATQDAVMPDGTPQPLITDKVGYIRNSVKAVVDAYDGTVELYEFDTEDPVLKAWRGVFPDTVKDESEISDELRAHLRYPEDLFKVQRDMLSKYHVDDSGTFFTNDAFWSVPGDPTAAEGRQELKQPPYYVVAADPETGESSFQLITPFRGLQREYLSAHMSASSDPNTYGEITVRVLPTDSVTQGPKQAQDAMMSSDQVAQDQTLWRGSNDLHNGNLLTLPVGGGEILYVEPIYSQRKDQASAFPKLLRVLVFYKGQVGYAPTIAEALSQVGIDPKAAQDIEEVDGTTTTPSTDETDTDTDQPATETPTAPVSEAEGIAAINDALSNLEAARDGSFEEYGRALDALDRAVDSYQSAQ.

The next 7 helical transmembrane spans lie at 19 to 39 (VTWI…SVGF), 63 to 83 (IVLF…AGYF), 115 to 135 (VMVL…QRSW), 176 to 196 (SMML…MGGI), 215 to 235 (TQLA…YWLD), 262 to 282 (KIIL…AIFL), and 290 to 310 (LAVV…PLML). The segment at 906–944 (AQDIEEVDGTTTTPSTDETDTDTDQPATETPTAPVSEAE) is disordered. Positions 929-939 (DQPATETPTAP) are enriched in low complexity.

The protein belongs to the UPF0182 family.

The protein localises to the cell membrane. In Corynebacterium glutamicum (strain R), this protein is UPF0182 protein cgR_0895.